The chain runs to 43 residues: Venom protein E2 (43 aa).

Disulfide bonds link C3-C20 and C14-C39.

As to expression, expressed by the venom gland.

It localises to the secreted. Neurotoxin. Blocks muscular nicotinic acetylcholine receptors (nAChR). The protein is Venom protein E2 of Micrurus pyrrhocryptus (Coral snake).